Consider the following 142-residue polypeptide: Large ribosomal subunit protein uL13 (142 aa).

It belongs to the universal ribosomal protein uL13 family. Part of the 50S ribosomal subunit.

Its function is as follows. This protein is one of the early assembly proteins of the 50S ribosomal subunit, although it is not seen to bind rRNA by itself. It is important during the early stages of 50S assembly. The protein is Large ribosomal subunit protein uL13 of Ralstonia pickettii (strain 12J).